The sequence spans 90 residues: Acylphosphatase (90 aa).

In terms of domain architecture, Acylphosphatase-like spans 3–90; the sequence is AVTLKATGRV…QNYHDFRITN (88 aa). Catalysis depends on residues Arg18 and Asn36.

The protein belongs to the acylphosphatase family.

The enzyme catalyses an acyl phosphate + H2O = a carboxylate + phosphate + H(+). The polypeptide is Acylphosphatase (acyP) (Lactiplantibacillus plantarum (strain ATCC BAA-793 / NCIMB 8826 / WCFS1) (Lactobacillus plantarum)).